The sequence spans 128 residues: Large ribosomal subunit protein bL17 (128 aa).

It belongs to the bacterial ribosomal protein bL17 family. In terms of assembly, part of the 50S ribosomal subunit. Contacts protein L32.

In Pseudomonas entomophila (strain L48), this protein is Large ribosomal subunit protein bL17.